The primary structure comprises 338 residues: Ornithine carbamoyltransferase (338 aa).

Carbamoyl phosphate is bound by residues 56–59 (STRT), Arg-107, and 134–137 (HPTQ). Residues Asn-168, Asp-232, and 236 to 237 (SM) each bind L-ornithine. Carbamoyl phosphate contacts are provided by residues 274 to 275 (CL) and Arg-320.

The protein belongs to the aspartate/ornithine carbamoyltransferase superfamily. OTCase family.

It localises to the cytoplasm. It catalyses the reaction carbamoyl phosphate + L-ornithine = L-citrulline + phosphate + H(+). The protein operates within amino-acid biosynthesis; L-arginine biosynthesis; L-arginine from L-ornithine and carbamoyl phosphate: step 1/3. In terms of biological role, reversibly catalyzes the transfer of the carbamoyl group from carbamoyl phosphate (CP) to the N(epsilon) atom of ornithine (ORN) to produce L-citrulline. The chain is Ornithine carbamoyltransferase (argI) from Buchnera aphidicola subsp. Schizaphis graminum (strain Sg).